The primary structure comprises 533 residues: WD repeat-containing protein PAC11 (533 aa).

The span at 1 to 19 (MERLKQLEEKRRQLKELRE) shows a compositional bias: basic and acidic residues. Residues 1 to 36 (MERLKQLEEKRRQLKELRERRKQASLFPGSETMGHH) are disordered. WD repeat units lie at residues 380-422 (FDEV…YLSL) and 432-475 (NHST…AIIG).

In terms of assembly, interacts with NUM1, when DYN1 is present.

Its subcellular location is the cytoplasm. The protein localises to the cytoskeleton. Required for viability in the absence of the kinesin-related CIN8 mitotic motor. May be a dynein intermediate chain. The polypeptide is WD repeat-containing protein PAC11 (PAC11) (Saccharomyces cerevisiae (strain ATCC 204508 / S288c) (Baker's yeast)).